We begin with the raw amino-acid sequence, 145 residues long: D-aminoacyl-tRNA deacylase (145 aa).

The short motif at 137–138 (GP) is the Gly-cisPro motif, important for rejection of L-amino acids element.

It belongs to the DTD family. In terms of assembly, homodimer.

The protein localises to the cytoplasm. It catalyses the reaction glycyl-tRNA(Ala) + H2O = tRNA(Ala) + glycine + H(+). The catalysed reaction is a D-aminoacyl-tRNA + H2O = a tRNA + a D-alpha-amino acid + H(+). An aminoacyl-tRNA editing enzyme that deacylates mischarged D-aminoacyl-tRNAs. Also deacylates mischarged glycyl-tRNA(Ala), protecting cells against glycine mischarging by AlaRS. Acts via tRNA-based rather than protein-based catalysis; rejects L-amino acids rather than detecting D-amino acids in the active site. By recycling D-aminoacyl-tRNA to D-amino acids and free tRNA molecules, this enzyme counteracts the toxicity associated with the formation of D-aminoacyl-tRNA entities in vivo and helps enforce protein L-homochirality. This chain is D-aminoacyl-tRNA deacylase, found in Salmonella agona (strain SL483).